The chain runs to 43 residues: uncharacterized protein (43 aa).

Residues 21-41 (SSFALIVVLFILLIIVGAAIF) form a helical membrane-spanning segment.

This sequence belongs to the SscA family.

It is found in the membrane. This is an uncharacterized protein from Bacillus subtilis (strain 168).